The sequence spans 297 residues: 32 kDa beta-galactoside-binding lectin lec-3 (297 aa).

Galectin domains lie at 11-142 (YRSK…VQWG) and 151-290 (ESGI…IQVV). 224 to 230 (WGNEERE) is an a beta-D-galactoside binding site.

In terms of biological role, binds galactose. The sequence is that of 32 kDa beta-galactoside-binding lectin lec-3 (lec-3) from Caenorhabditis elegans.